We begin with the raw amino-acid sequence, 122 residues long: Large ribosomal subunit protein uL14 (122 aa).

Belongs to the universal ribosomal protein uL14 family. In terms of assembly, part of the 50S ribosomal subunit. Forms a cluster with proteins L3 and L19. In the 70S ribosome, L14 and L19 interact and together make contacts with the 16S rRNA in bridges B5 and B8.

Binds to 23S rRNA. Forms part of two intersubunit bridges in the 70S ribosome. The protein is Large ribosomal subunit protein uL14 of Kosmotoga olearia (strain ATCC BAA-1733 / DSM 21960 / TBF 19.5.1).